A 232-amino-acid chain; its full sequence is Ornithine carbamoyltransferase (232 aa).

Carbamoyl phosphate-binding positions include Q15, R39, and 66 to 69 (HPTQ). L-ornithine-binding positions include N99, D163, and 167 to 168 (SM). Carbamoyl phosphate contacts are provided by residues 204–207 (HCLP) and T232.

This sequence belongs to the aspartate/ornithine carbamoyltransferase superfamily. OTCase family.

Its subcellular location is the cytoplasm. The enzyme catalyses carbamoyl phosphate + L-ornithine = L-citrulline + phosphate + H(+). It functions in the pathway amino-acid biosynthesis; L-arginine biosynthesis; L-arginine from L-ornithine and carbamoyl phosphate: step 1/3. This is Ornithine carbamoyltransferase (argF) from Neisseria animalis.